The primary structure comprises 79 residues: Conotoxin Vi6.3 (79 aa).

The signal sequence occupies residues 1–22 (MKLTCVLIITVLFLTASQLITA). A propeptide spanning residues 23–47 (DYSRDQRQYRAVRLGDEMRNFKGAR) is cleaved from the precursor. 3 disulfides stabilise this stretch: cysteine 49/cysteine 62, cysteine 56/cysteine 67, and cysteine 61/cysteine 77. A 4-hydroxyproline mark is found at proline 60 and proline 63.

It belongs to the conotoxin O1 superfamily. As to expression, expressed by the venom duct.

The protein localises to the secreted. Ion channel inhibitor that inhibits the increase in intracellular calcium upon depolarization in DRG neurons. In vivo, both intraperitoneal and intracranial injections into mice induce hyperactivity. This Conus virgo (Virgin cone) protein is Conotoxin Vi6.3.